The primary structure comprises 465 residues: Sodium-dependent phosphate transport protein 1 (465 aa).

3 N-linked (GlcNAc...) asparagine glycosylation sites follow: N39, N47, and N56. 10 helical membrane passes run 79–99 (GLIL…VGYL), 117–137 (SLMS…VIVC), 176–196 (FVMG…LLGW), 199–219 (VFYI…FLFF), 260–280 (LPLW…SLLV), 304–324 (LPYL…DFFL), 337–356 (LFTT…LLYL), 363–383 (TVIF…GQLI), 399–419 (VTAL…GLIL), and 429–449 (KIFF…FLFA).

Belongs to the major facilitator superfamily. Sodium/anion cotransporter family. In terms of assembly, interacts with PDZK1. In terms of tissue distribution, kidney.

The protein localises to the apical cell membrane. It catalyses the reaction 3 Na(+)(out) + phosphate(out) = 3 Na(+)(in) + phosphate(in). The catalysed reaction is urate(out) = urate(in). Its function is as follows. Important for the resorption of phosphate by the kidney. May be involved in actively transporting phosphate into cells via Na(+) cotransport in the renal brush border membrane. Plays a role in urate transport in the kidney. The protein is Sodium-dependent phosphate transport protein 1 (Slc17a1) of Mus musculus (Mouse).